Reading from the N-terminus, the 331-residue chain is Pantothenate kinase (331 aa).

Glycine 109–serine 116 is an ATP binding site.

It belongs to the prokaryotic pantothenate kinase family.

It is found in the cytoplasm. It catalyses the reaction (R)-pantothenate + ATP = (R)-4'-phosphopantothenate + ADP + H(+). The protein operates within cofactor biosynthesis; coenzyme A biosynthesis; CoA from (R)-pantothenate: step 1/5. The protein is Pantothenate kinase of Rhizobium meliloti (strain 1021) (Ensifer meliloti).